The chain runs to 213 residues: Thiamine-phosphate synthase (213 aa).

Residues 39–43 and D71 each bind 4-amino-2-methyl-5-(diphosphooxymethyl)pyrimidine; that span reads QYRDK. 2 residues coordinate Mg(2+): D72 and D91. S108 serves as a coordination point for 4-amino-2-methyl-5-(diphosphooxymethyl)pyrimidine. 2-[(2R,5Z)-2-carboxy-4-methylthiazol-5(2H)-ylidene]ethyl phosphate is bound at residue 135-137; the sequence is TDT. A 4-amino-2-methyl-5-(diphosphooxymethyl)pyrimidine-binding site is contributed by K138. 2-[(2R,5Z)-2-carboxy-4-methylthiazol-5(2H)-ylidene]ethyl phosphate contacts are provided by residues G165 and 185-186; that span reads VS.

The protein belongs to the thiamine-phosphate synthase family. Mg(2+) serves as cofactor.

It carries out the reaction 2-[(2R,5Z)-2-carboxy-4-methylthiazol-5(2H)-ylidene]ethyl phosphate + 4-amino-2-methyl-5-(diphosphooxymethyl)pyrimidine + 2 H(+) = thiamine phosphate + CO2 + diphosphate. It catalyses the reaction 2-(2-carboxy-4-methylthiazol-5-yl)ethyl phosphate + 4-amino-2-methyl-5-(diphosphooxymethyl)pyrimidine + 2 H(+) = thiamine phosphate + CO2 + diphosphate. The enzyme catalyses 4-methyl-5-(2-phosphooxyethyl)-thiazole + 4-amino-2-methyl-5-(diphosphooxymethyl)pyrimidine + H(+) = thiamine phosphate + diphosphate. It functions in the pathway cofactor biosynthesis; thiamine diphosphate biosynthesis; thiamine phosphate from 4-amino-2-methyl-5-diphosphomethylpyrimidine and 4-methyl-5-(2-phosphoethyl)-thiazole: step 1/1. In terms of biological role, condenses 4-methyl-5-(beta-hydroxyethyl)thiazole monophosphate (THZ-P) and 2-methyl-4-amino-5-hydroxymethyl pyrimidine pyrophosphate (HMP-PP) to form thiamine monophosphate (TMP). The sequence is that of Thiamine-phosphate synthase from Thermoplasma acidophilum (strain ATCC 25905 / DSM 1728 / JCM 9062 / NBRC 15155 / AMRC-C165).